We begin with the raw amino-acid sequence, 255 residues long: Tryptophan synthase alpha chain (255 aa).

Catalysis depends on proton acceptor residues glutamate 51 and aspartate 62.

This sequence belongs to the TrpA family. As to quaternary structure, tetramer of two alpha and two beta chains.

It carries out the reaction (1S,2R)-1-C-(indol-3-yl)glycerol 3-phosphate + L-serine = D-glyceraldehyde 3-phosphate + L-tryptophan + H2O. Its pathway is amino-acid biosynthesis; L-tryptophan biosynthesis; L-tryptophan from chorismate: step 5/5. Functionally, the alpha subunit is responsible for the aldol cleavage of indoleglycerol phosphate to indole and glyceraldehyde 3-phosphate. This is Tryptophan synthase alpha chain from Maridesulfovibrio salexigens (strain ATCC 14822 / DSM 2638 / NCIMB 8403 / VKM B-1763) (Desulfovibrio salexigens).